We begin with the raw amino-acid sequence, 151 residues long: Ribosome maturation factor RimP (151 aa).

Belongs to the RimP family.

The protein localises to the cytoplasm. Required for maturation of 30S ribosomal subunits. This chain is Ribosome maturation factor RimP, found in Shewanella piezotolerans (strain WP3 / JCM 13877).